The sequence spans 239 residues: Tetrahydromethanopterin S-methyltransferase subunit A (239 aa).

Residues 1 to 215 (MADKKAPAAG…EAAMIAKFNS (215 aa)) lie on the Cytoplasmic side of the membrane. A 5-hydroxybenzimidazolylcob(I)amide-binding site is contributed by His85. A helical transmembrane segment spans residues 216–238 (GYYNGKIQGIAIGLFLSIVIFSL). A topological domain (extracellular) is located at residue Leu239.

Belongs to the MtrA family. In terms of assembly, the complex is composed of 8 subunits; MtrA, MtrB, MtrC, MtrD, MtrE, MtrF, MtrG and MtrH. 5-hydroxybenzimidazolylcob(I)amide serves as cofactor.

The protein localises to the cell membrane. It catalyses the reaction 5-methyl-5,6,7,8-tetrahydromethanopterin + coenzyme M + 2 Na(+)(in) = 5,6,7,8-tetrahydromethanopterin + methyl-coenzyme M + 2 Na(+)(out). Its pathway is one-carbon metabolism; methanogenesis from CO(2); methyl-coenzyme M from 5,10-methylene-5,6,7,8-tetrahydromethanopterin: step 2/2. In terms of biological role, part of a complex that catalyzes the formation of methyl-coenzyme M and tetrahydromethanopterin from coenzyme M and methyl-tetrahydromethanopterin. This is an energy-conserving, sodium-ion translocating step. This is Tetrahydromethanopterin S-methyltransferase subunit A from Methanococcus maripaludis (strain DSM 14266 / JCM 13030 / NBRC 101832 / S2 / LL).